The following is a 349-amino-acid chain: Phosphoribosylformylglycinamidine cyclo-ligase (349 aa).

It belongs to the AIR synthase family.

The protein localises to the cytoplasm. It catalyses the reaction 2-formamido-N(1)-(5-O-phospho-beta-D-ribosyl)acetamidine + ATP = 5-amino-1-(5-phospho-beta-D-ribosyl)imidazole + ADP + phosphate + H(+). It participates in purine metabolism; IMP biosynthesis via de novo pathway; 5-amino-1-(5-phospho-D-ribosyl)imidazole from N(2)-formyl-N(1)-(5-phospho-D-ribosyl)glycinamide: step 2/2. The protein is Phosphoribosylformylglycinamidine cyclo-ligase of Jannaschia sp. (strain CCS1).